The primary structure comprises 365 residues: Phospho-N-acetylmuramoyl-pentapeptide-transferase (365 aa).

The next 9 membrane-spanning stretches (helical) occupy residues 47–67 (LLALGLGFSLAAIAGYWVVPL), 92–112 (PTMGGIFAIPAGLLPALILAG), 114–134 (SPLVWALAFVTLAYATIGWLD), 153–173 (LCLQFGAAFLFCLWLISQQGW), 180–200 (ITLPFGWSLALSLLFWPLAVF), 215–235 (LDGLAGGTGAAVLAGLGLWLA), 239–259 (PAIATFCCSLAGGFLGFLLHN), 281–301 (AIAIVANCLWVLLVMGGLFVL), and 344–364 (TQVVASFYGLTLLLIASCWLL).

The protein belongs to the glycosyltransferase 4 family. MraY subfamily. Requires Mg(2+) as cofactor.

The protein resides in the cell inner membrane. It carries out the reaction UDP-N-acetyl-alpha-D-muramoyl-L-alanyl-gamma-D-glutamyl-meso-2,6-diaminopimeloyl-D-alanyl-D-alanine + di-trans,octa-cis-undecaprenyl phosphate = di-trans,octa-cis-undecaprenyl diphospho-N-acetyl-alpha-D-muramoyl-L-alanyl-D-glutamyl-meso-2,6-diaminopimeloyl-D-alanyl-D-alanine + UMP. It functions in the pathway cell wall biogenesis; peptidoglycan biosynthesis. Functionally, catalyzes the initial step of the lipid cycle reactions in the biosynthesis of the cell wall peptidoglycan: transfers peptidoglycan precursor phospho-MurNAc-pentapeptide from UDP-MurNAc-pentapeptide onto the lipid carrier undecaprenyl phosphate, yielding undecaprenyl-pyrophosphoryl-MurNAc-pentapeptide, known as lipid I. The sequence is that of Phospho-N-acetylmuramoyl-pentapeptide-transferase from Synechococcus elongatus (strain ATCC 33912 / PCC 7942 / FACHB-805) (Anacystis nidulans R2).